The sequence spans 74 residues: uncharacterized protein (74 aa).

This is an uncharacterized protein from Methanocaldococcus jannaschii (strain ATCC 43067 / DSM 2661 / JAL-1 / JCM 10045 / NBRC 100440) (Methanococcus jannaschii).